A 557-amino-acid polypeptide reads, in one-letter code: Hydroxylamine reductase (557 aa).

Positions 4, 7, 19, and 26 each coordinate [4Fe-4S] cluster. Hybrid [4Fe-2O-2S] cluster contacts are provided by H253, E277, C321, C408, C436, C461, E495, and K497. Cysteine persulfide is present on C408.

It belongs to the HCP family. Requires [4Fe-4S] cluster as cofactor. Hybrid [4Fe-2O-2S] cluster is required as a cofactor.

Its subcellular location is the cytoplasm. The catalysed reaction is A + NH4(+) + H2O = hydroxylamine + AH2 + H(+). Its function is as follows. Catalyzes the reduction of hydroxylamine to form NH(3) and H(2)O. The protein is Hydroxylamine reductase of Acidithiobacillus ferrooxidans (strain ATCC 53993 / BNL-5-31) (Leptospirillum ferrooxidans (ATCC 53993)).